The primary structure comprises 256 residues: MTDLKKAAQRAIELMDLTTLNDDDTDQKVIDLCHKAVTPAGNTAAICIYPRFIPIARKTLDELGAEDIQIATVTNFPHGNDDIAIAVLETRAAVAYGADEVDVVFPYRALMEGNETVGYELVKACKEACGEVLLKVIIESGVLADPVLIRRASELSIEAGADFIKTSTGKVPVNATLEAAEIMLTVISEKNTKVGFKPAGGVRDAAQAAEFLGVAERILGADWVSPRTFRFGASSLLNSLLHTLELADAPKRTQGY.

The Proton donor/acceptor role is filled by aspartate 102. The Schiff-base intermediate with acetaldehyde role is filled by lysine 165. The Proton donor/acceptor role is filled by lysine 197.

This sequence belongs to the DeoC/FbaB aldolase family. DeoC type 2 subfamily.

The protein resides in the cytoplasm. The catalysed reaction is 2-deoxy-D-ribose 5-phosphate = D-glyceraldehyde 3-phosphate + acetaldehyde. It participates in carbohydrate degradation; 2-deoxy-D-ribose 1-phosphate degradation; D-glyceraldehyde 3-phosphate and acetaldehyde from 2-deoxy-alpha-D-ribose 1-phosphate: step 2/2. Functionally, catalyzes a reversible aldol reaction between acetaldehyde and D-glyceraldehyde 3-phosphate to generate 2-deoxy-D-ribose 5-phosphate. The protein is Deoxyribose-phosphate aldolase of Shewanella oneidensis (strain ATCC 700550 / JCM 31522 / CIP 106686 / LMG 19005 / NCIMB 14063 / MR-1).